We begin with the raw amino-acid sequence, 437 residues long: GTPase Obg (437 aa).

The Obg domain occupies 2–160; sequence SLFLDTARIE…KILLLELRVL (159 aa). Positions 161–338 constitute an OBG-type G domain; sequence ADVGLVGFPS…LLARTSELLA (178 aa). Residues 167–174, 192–196, 214–217, 284–287, and 319–321 each bind GTP; these read GFPSVGKS, FTTIT, DMPG, NKMD, and SGL. 2 residues coordinate Mg(2+): S174 and T194. Residues 359–437 form the OCT domain; that stretch reads GFEDEEKPFK…IQKFEFEFVD (79 aa).

This sequence belongs to the TRAFAC class OBG-HflX-like GTPase superfamily. OBG GTPase family. In terms of assembly, monomer. Mg(2+) serves as cofactor.

The protein localises to the cytoplasm. Its function is as follows. An essential GTPase which binds GTP, GDP and possibly (p)ppGpp with moderate affinity, with high nucleotide exchange rates and a fairly low GTP hydrolysis rate. Plays a role in control of the cell cycle, stress response, ribosome biogenesis and in those bacteria that undergo differentiation, in morphogenesis control. This chain is GTPase Obg, found in Lactococcus lactis subsp. cremoris (strain SK11).